The sequence spans 455 residues: tRNA modification GTPase MnmE (455 aa).

(6S)-5-formyl-5,6,7,8-tetrahydrofolate-binding residues include Arg-26, Glu-86, and Arg-125. The TrmE-type G domain maps to 222-376; sequence GLKTAIIGRP…VEEKINQIFF (155 aa). Asn-232 provides a ligand contact to K(+). GTP is bound by residues 232–237, 251–257, and 276–279; these read NVGKSS, TDIAGTT, and DTAG. Ser-236 provides a ligand contact to Mg(2+). K(+)-binding residues include Thr-251, Ile-253, and Thr-256. Position 257 (Thr-257) interacts with Mg(2+). Lys-455 contacts (6S)-5-formyl-5,6,7,8-tetrahydrofolate.

This sequence belongs to the TRAFAC class TrmE-Era-EngA-EngB-Septin-like GTPase superfamily. TrmE GTPase family. As to quaternary structure, homodimer. Heterotetramer of two MnmE and two MnmG subunits. It depends on K(+) as a cofactor.

The protein resides in the cytoplasm. Functionally, exhibits a very high intrinsic GTPase hydrolysis rate. Involved in the addition of a carboxymethylaminomethyl (cmnm) group at the wobble position (U34) of certain tRNAs, forming tRNA-cmnm(5)s(2)U34. This Lactococcus lactis subsp. lactis (strain IL1403) (Streptococcus lactis) protein is tRNA modification GTPase MnmE.